The sequence spans 397 residues: Enoyl-[acyl-carrier-protein] reductase [NADH] (397 aa).

Residues 47–52 (GASTGY), 73–74 (LE), 110–111 (DA), and 138–139 (LA) each bind NAD(+). Tyr-224 lines the substrate pocket. Catalysis depends on Tyr-234, which acts as the Proton donor. NAD(+) is bound by residues Lys-243 and 272-274 (LVT).

It belongs to the TER reductase family. As to quaternary structure, monomer.

It catalyses the reaction a 2,3-saturated acyl-[ACP] + NAD(+) = a (2E)-enoyl-[ACP] + NADH + H(+). It participates in lipid metabolism; fatty acid biosynthesis. In terms of biological role, involved in the final reduction of the elongation cycle of fatty acid synthesis (FAS II). Catalyzes the reduction of a carbon-carbon double bond in an enoyl moiety that is covalently linked to an acyl carrier protein (ACP). In Methylobacillus flagellatus (strain ATCC 51484 / DSM 6875 / VKM B-1610 / KT), this protein is Enoyl-[acyl-carrier-protein] reductase [NADH].